Consider the following 237-residue polypeptide: Orotidine 5'-phosphate decarboxylase (237 aa).

Residues Asp10, Lys32, 59 to 68 (DLKLHDIPNT), Thr118, Arg180, Gln189, Gly209, and Arg210 each bind substrate. Catalysis depends on Lys61, which acts as the Proton donor.

The protein belongs to the OMP decarboxylase family. Type 1 subfamily. Homodimer.

It catalyses the reaction orotidine 5'-phosphate + H(+) = UMP + CO2. It participates in pyrimidine metabolism; UMP biosynthesis via de novo pathway; UMP from orotate: step 2/2. Catalyzes the decarboxylation of orotidine 5'-monophosphate (OMP) to uridine 5'-monophosphate (UMP). This is Orotidine 5'-phosphate decarboxylase from Fusobacterium nucleatum subsp. nucleatum (strain ATCC 25586 / DSM 15643 / BCRC 10681 / CIP 101130 / JCM 8532 / KCTC 2640 / LMG 13131 / VPI 4355).